The sequence spans 340 residues: Beta-ketoacyl-[acyl-carrier-protein] synthase III (340 aa).

Residues Cys-122 and His-260 contribute to the active site. Residues 261 to 265 (QANTR) form an ACP-binding region. The active site involves Asn-291.

The protein belongs to the thiolase-like superfamily. FabH family. As to quaternary structure, homodimer.

It localises to the cytoplasm. It carries out the reaction malonyl-[ACP] + acetyl-CoA + H(+) = 3-oxobutanoyl-[ACP] + CO2 + CoA. Its pathway is lipid metabolism; fatty acid biosynthesis. In terms of biological role, catalyzes the condensation reaction of fatty acid synthesis by the addition to an acyl acceptor of two carbons from malonyl-ACP. Catalyzes the first condensation reaction which initiates fatty acid synthesis and may therefore play a role in governing the total rate of fatty acid production. Possesses both acetoacetyl-ACP synthase and acetyl transacylase activities. Its substrate specificity determines the biosynthesis of branched-chain and/or straight-chain of fatty acids. The sequence is that of Beta-ketoacyl-[acyl-carrier-protein] synthase III from Mycobacteroides abscessus (strain ATCC 19977 / DSM 44196 / CCUG 20993 / CIP 104536 / JCM 13569 / NCTC 13031 / TMC 1543 / L948) (Mycobacterium abscessus).